A 351-amino-acid polypeptide reads, in one-letter code: ATP-dependent 6-phosphofructokinase subunit gamma (351 aa).

Heterododecamer of 4 alpha, 4 beta and 4 gamma chains. The gamma chain bridges the N-terminal halves of the alpha and beta subunits.

It is found in the cytoplasm. The protein operates within carbohydrate degradation; glycolysis; D-glyceraldehyde 3-phosphate and glycerone phosphate from D-glucose: step 3/4. Structural subunit of pyrophosphate--fructose 6-phosphate 1-phosphotransferase. Not required for catalytic activity. Fine-tunes allosteric regulation of the ATP-PFK by ATP, fructose 2,6-bisphosphate and AMP. The protein is ATP-dependent 6-phosphofructokinase subunit gamma (PFK3) of Komagataella pastoris (Yeast).